Consider the following 1024-residue polypeptide: MAQGAMRFCSEGDCAISPPRCPRRWLPEGPVPQSPPASMYGSTGSLLRRVAGPGPRGRELGRVTAPCTPLRGPPSPRVAPSPWAPSSPTGQPPPGAQSSVVIFRFVEKASVRPLNGLPAPGGLSRSWDLGGVSPPRPTPALGPGSNRKLRLEASTSDPLPARGGSALPGSRNLVHGPPAPPQVGADGLYSSLPNGLGGPPERLATLFGGPADTGFLNQGDTWSSPREVSSHAQRIARAKWEFFYGSLDPPSSGAKPPEQAPPSPPGVGSRQGSGVAVGRAAKYSETDLDTVPLRCYRETDIDEVLAEREEADSAIESQPSSEGPPGTAYPPAPRPGPLPGPHPSLGSGNEDEDDDEAGGEEDVDDEVFEASEGARPGSRMPLKSPVPFLPGTSPSADGPDSFSCVFEAILESHRAKGTSYTSLASLEALASPGPTQSPFFTFELPPQPPAPRPDPPAPAPLAPLEPDSGTSSAADGPWTQRGEEEEAEARAKLAPGREPPSPCHSEDSLGLGAAPLGSEPPLSQLVSDSDSELDSTERLALGSTDTLSNGQKADLEAAQRLAKRLYRLDGFRKADVARHLGKNNDFSKLVAGEYLKFFVFTGMTLDQALRVFLKELALMGETQERERVLAHFSQRYFQCNPEALSSEDGAHTLTCALMLLNTDLHGHNIGKRMTCGDFIGNLEGLNDGGDFPRELLKALYSSIKNEKLQWAIDEEELRRSLSELADPNPKVIKRISGGSGSGSSPFLDLTPEPGAAVYKHGALVRKVHADPDCRKTPRGKRGWKSFHGILKGMILYLQKEEYKPGKALSETELKNAISIHHALATRASDYSKRPHVFYLRTADWRVFLFQAPSLEQMQSWITRINVVAAMFSAPPFPAAVSSQKKFSRPLLPSAATRLSQEEQVRTHEAKLKAMASELREHRAAQLGKKGRGKEAEEQRQKEAYLEFEKSRYSTYAALLRVKLKAGSEELDAVEAALAQAGSTEDGLPPSHSSPSLQPKPSSQPRAQRHSSEPRPGAGSGRRKP.

Disordered regions lie at residues 25–98 (WLPE…GAQS), 113–230 (PLNG…EVSS), 246–401 (SLDP…GPDS), and 430–536 (ASPG…LDST). Pro residues predominate over residues 71-95 (RGPPSPRVAPSPWAPSSPTGQPPPG). Serine 126 and serine 156 each carry phosphoserine. Over residues 215 to 230 (FLNQGDTWSSPREVSS) the composition is skewed to polar residues. The span at 300–313 (DIDEVLAEREEADS) shows a compositional bias: acidic residues. Over residues 327–342 (TAYPPAPRPGPLPGPH) the composition is skewed to pro residues. Positions 349–369 (NEDEDDDEAGGEEDVDDEVFE) are enriched in acidic residues. A compositionally biased stretch (pro residues) spans 445–463 (PPQPPAPRPDPPAPAPLAP). In terms of domain architecture, SEC7 spans 512–706 (GAAPLGSEPP…KALYSSIKNE (195 aa)). Phosphoserine is present on serine 720. The PH domain maps to 756–869 (AVYKHGALVR…WITRINVVAA (114 aa)). Residues 898–924 (LSQEEQVRTHEAKLKAMASELREHRAA) adopt a coiled-coil conformation. The tract at residues 976-1024 (ALAQAGSTEDGLPPSHSSPSLQPKPSSQPRAQRHSSEPRPGAGSGRRKP) is disordered. Residues 987–1004 (LPPSHSSPSLQPKPSSQP) are compositionally biased toward low complexity.

This sequence belongs to the PSD family. As to quaternary structure, interacts with ACTN1. Interacts (ARF6-bound form) with KCNK1; does not interact with KCNK1 in the absence of ARF6. As to expression, isoform 2 is expressed in the brain.

The protein localises to the cell membrane. It localises to the cell projection. The protein resides in the ruffle membrane. Its subcellular location is the cleavage furrow. Its function is as follows. Guanine nucleotide exchange factor for ARF6. Induces cytoskeletal remodeling. This is PH and SEC7 domain-containing protein 1 (PSD) from Homo sapiens (Human).